A 311-amino-acid chain; its full sequence is Probable manganese-dependent inorganic pyrophosphatase (311 aa).

Positions 9, 13, 15, 75, 97, and 149 each coordinate Mn(2+).

This sequence belongs to the PPase class C family. Mn(2+) serves as cofactor.

It is found in the cytoplasm. The enzyme catalyses diphosphate + H2O = 2 phosphate + H(+). This chain is Probable manganese-dependent inorganic pyrophosphatase, found in Lactobacillus delbrueckii subsp. bulgaricus (strain ATCC BAA-365 / Lb-18).